The chain runs to 444 residues: Glutamate-1-semialdehyde 2,1-aminomutase (444 aa).

N6-(pyridoxal phosphate)lysine is present on Lys267.

Belongs to the class-III pyridoxal-phosphate-dependent aminotransferase family. HemL subfamily. Homodimer. It depends on pyridoxal 5'-phosphate as a cofactor.

The protein resides in the cytoplasm. It catalyses the reaction (S)-4-amino-5-oxopentanoate = 5-aminolevulinate. Its pathway is porphyrin-containing compound metabolism; protoporphyrin-IX biosynthesis; 5-aminolevulinate from L-glutamyl-tRNA(Glu): step 2/2. In Xylella fastidiosa (strain M12), this protein is Glutamate-1-semialdehyde 2,1-aminomutase.